Reading from the N-terminus, the 451-residue chain is Phosphoglucosamine mutase (451 aa).

The Phosphoserine intermediate role is filled by S101. Residues S101, D243, D245, and D247 each contribute to the Mg(2+) site. Residue S101 is modified to Phosphoserine.

The protein belongs to the phosphohexose mutase family. It depends on Mg(2+) as a cofactor. Activated by phosphorylation.

It catalyses the reaction alpha-D-glucosamine 1-phosphate = D-glucosamine 6-phosphate. Functionally, catalyzes the conversion of glucosamine-6-phosphate to glucosamine-1-phosphate. The sequence is that of Phosphoglucosamine mutase from Geobacter metallireducens (strain ATCC 53774 / DSM 7210 / GS-15).